Reading from the N-terminus, the 418-residue chain is Serine hydroxymethyltransferase (418 aa).

Residues L118 and 122 to 124 (GHL) contribute to the (6S)-5,6,7,8-tetrahydrofolate site. An N6-(pyridoxal phosphate)lysine modification is found at K227. Position 242 (E242) interacts with (6S)-5,6,7,8-tetrahydrofolate.

This sequence belongs to the SHMT family. In terms of assembly, homodimer. Pyridoxal 5'-phosphate serves as cofactor.

The protein resides in the cytoplasm. The enzyme catalyses (6R)-5,10-methylene-5,6,7,8-tetrahydrofolate + glycine + H2O = (6S)-5,6,7,8-tetrahydrofolate + L-serine. The protein operates within one-carbon metabolism; tetrahydrofolate interconversion. It functions in the pathway amino-acid biosynthesis; glycine biosynthesis; glycine from L-serine: step 1/1. In terms of biological role, catalyzes the reversible interconversion of serine and glycine with tetrahydrofolate (THF) serving as the one-carbon carrier. This reaction serves as the major source of one-carbon groups required for the biosynthesis of purines, thymidylate, methionine, and other important biomolecules. Also exhibits THF-independent aldolase activity toward beta-hydroxyamino acids, producing glycine and aldehydes, via a retro-aldol mechanism. This Chloroflexus aggregans (strain MD-66 / DSM 9485) protein is Serine hydroxymethyltransferase.